The following is a 300-amino-acid chain: Bifunctional protein FolD (300 aa).

Residues 169–171 (GHS) and Ile235 each bind NADP(+).

The protein belongs to the tetrahydrofolate dehydrogenase/cyclohydrolase family. As to quaternary structure, homodimer.

The enzyme catalyses (6R)-5,10-methylene-5,6,7,8-tetrahydrofolate + NADP(+) = (6R)-5,10-methenyltetrahydrofolate + NADPH. It carries out the reaction (6R)-5,10-methenyltetrahydrofolate + H2O = (6R)-10-formyltetrahydrofolate + H(+). Its pathway is one-carbon metabolism; tetrahydrofolate interconversion. Its function is as follows. Catalyzes the oxidation of 5,10-methylenetetrahydrofolate to 5,10-methenyltetrahydrofolate and then the hydrolysis of 5,10-methenyltetrahydrofolate to 10-formyltetrahydrofolate. The chain is Bifunctional protein FolD from Rhodobacter capsulatus (strain ATCC BAA-309 / NBRC 16581 / SB1003).